Reading from the N-terminus, the 554-residue chain is 3-(3-hydroxy-phenyl)propionate/3-hydroxycinnamic acid hydroxylase (554 aa).

FAD contacts are provided by residues 17-46 and 285-295; these read QVAI…VVEK and FRIDRVLLAGD.

Belongs to the PheA/TfdB FAD monooxygenase family. It depends on FAD as a cofactor.

The catalysed reaction is 3-(3-hydroxyphenyl)propanoate + NADH + O2 + H(+) = 3-(2,3-dihydroxyphenyl)propanoate + NAD(+) + H2O. It carries out the reaction (2E)-3-(3-hydroxyphenyl)prop-2-enoate + NADH + O2 + H(+) = (2E)-3-(2,3-dihydroxyphenyl)prop-2-enoate + NAD(+) + H2O. It functions in the pathway aromatic compound metabolism; 3-phenylpropanoate degradation. Catalyzes the insertion of one atom of molecular oxygen into position 2 of the phenyl ring of 3-(3-hydroxyphenyl)propionate (3-HPP) and hydroxycinnamic acid (3HCI). This Escherichia coli O81 (strain ED1a) protein is 3-(3-hydroxy-phenyl)propionate/3-hydroxycinnamic acid hydroxylase.